A 216-amino-acid polypeptide reads, in one-letter code: Vesicle-associated membrane protein 7A (216 aa).

At M1–K189 the chain is on the cytoplasmic side. The region spanning I6–L112 is the Longin domain. One can recognise a v-SNARE coiled-coil homology domain in the interval K126–Q186. The helical; Anchor for type IV membrane protein transmembrane segment at L190–L210 threads the bilayer. The Vesicular segment spans residues K211–I216.

Belongs to the synaptobrevin family. Component of the SNARE complex composed of syn7A, syn8A, vamp7A and vti1A.

The protein resides in the cytoplasmic vesicle. The protein localises to the secretory vesicle membrane. Its subcellular location is the golgi apparatus. It is found in the trans-Golgi network membrane. It localises to the late endosome membrane. The protein resides in the lysosome membrane. The protein localises to the endoplasmic reticulum membrane. Its subcellular location is the phagosome membrane. In terms of biological role, involved in the targeting and/or fusion of transport vesicles to their target membrane during transport of proteins from the early endosome to the lysosome. Required for heterotypic fusion of late endosomes with lysosomes and homotypic lysosomal fusion. Required for calcium regulated lysosomal exocytosis. This Dictyostelium discoideum (Social amoeba) protein is Vesicle-associated membrane protein 7A.